Here is an 80-residue protein sequence, read N- to C-terminus: Small ribosomal subunit protein uS17c (80 aa).

It belongs to the universal ribosomal protein uS17 family. In terms of assembly, part of the 30S ribosomal subunit.

The protein resides in the plastid. Its subcellular location is the chloroplast. One of the primary rRNA binding proteins, it binds specifically to the 5'-end of 16S ribosomal RNA. The protein is Small ribosomal subunit protein uS17c (rps17) of Gracilaria tenuistipitata var. liui (Red alga).